Consider the following 115-residue polypeptide: Ribonuclease P protein component (115 aa).

The protein belongs to the RnpA family. In terms of assembly, consists of a catalytic RNA component (M1 or rnpB) and a protein subunit.

The enzyme catalyses Endonucleolytic cleavage of RNA, removing 5'-extranucleotides from tRNA precursor.. Its function is as follows. RNaseP catalyzes the removal of the 5'-leader sequence from pre-tRNA to produce the mature 5'-terminus. It can also cleave other RNA substrates such as 4.5S RNA. The protein component plays an auxiliary but essential role in vivo by binding to the 5'-leader sequence and broadening the substrate specificity of the ribozyme. This chain is Ribonuclease P protein component, found in Bacillus cereus (strain AH187).